Reading from the N-terminus, the 257-residue chain is Ditrans,polycis-undecaprenyl-diphosphate synthase ((2E,6E)-farnesyl-diphosphate specific) (257 aa).

Asp24 is a catalytic residue. Asp24 contributes to the Mg(2+) binding site. Substrate contacts are provided by residues 25 to 28 (GNGR), Trp29, Arg37, His41, and 69 to 71 (SSE). Asn72 functions as the Proton acceptor in the catalytic mechanism. Substrate is bound by residues Trp73, Arg75, Arg192, and 198 to 200 (RIS). Position 211 (Glu211) interacts with Mg(2+).

This sequence belongs to the UPP synthase family. As to quaternary structure, homodimer. Requires Mg(2+) as cofactor.

It carries out the reaction 8 isopentenyl diphosphate + (2E,6E)-farnesyl diphosphate = di-trans,octa-cis-undecaprenyl diphosphate + 8 diphosphate. Its function is as follows. Catalyzes the sequential condensation of isopentenyl diphosphate (IPP) with (2E,6E)-farnesyl diphosphate (E,E-FPP) to yield (2Z,6Z,10Z,14Z,18Z,22Z,26Z,30Z,34E,38E)-undecaprenyl diphosphate (di-trans,octa-cis-UPP). UPP is the precursor of glycosyl carrier lipid in the biosynthesis of bacterial cell wall polysaccharide components such as peptidoglycan and lipopolysaccharide. The protein is Ditrans,polycis-undecaprenyl-diphosphate synthase ((2E,6E)-farnesyl-diphosphate specific) of Aliivibrio fischeri (strain ATCC 700601 / ES114) (Vibrio fischeri).